The chain runs to 446 residues: Dual specificity mitogen-activated protein kinase kinase 2 (446 aa).

Over residues 27-42 (SSGSSAGLGFQGQSQQ) the composition is skewed to low complexity. The disordered stretch occupies residues 27-51 (SSGSSAGLGFQGQSQQHSTVNSMQG). Residues 149–414 (LKDLGEIGRG…YKELLKHPFI (266 aa)) enclose the Protein kinase domain. ATP-binding positions include 155 to 163 (IGRGAYGSV) and Lys-178. The active-site Proton acceptor is the Asp-276. Ser-304 is subject to Phosphoserine; by RAF. Thr-308 is subject to Phosphothreonine; by RAF.

The protein belongs to the protein kinase superfamily. STE Ser/Thr protein kinase family. MAP kinase kinase subfamily. Post-translationally, MAPKK is itself dependent on Ser/Thr phosphorylation for activity catalyzed by MAP kinase kinase kinases. Expressed abundantly in the adult brain and muscle.

The catalysed reaction is L-seryl-[protein] + ATP = O-phospho-L-seryl-[protein] + ADP + H(+). It carries out the reaction L-threonyl-[protein] + ATP = O-phospho-L-threonyl-[protein] + ADP + H(+). The enzyme catalyses L-tyrosyl-[protein] + ATP = O-phospho-L-tyrosyl-[protein] + ADP + H(+). Its function is as follows. Catalyzes the concomitant phosphorylation of a threonine and a tyrosine residue in a Thr-Glu-Tyr sequence located in MAP kinases. The polypeptide is Dual specificity mitogen-activated protein kinase kinase 2 (map2k2) (Xenopus laevis (African clawed frog)).